Consider the following 1601-residue polypeptide: Ectopic P granules protein 5 (1601 aa).

Residues 1–109 form a disordered region; sequence MAELVRPKKP…EAPPIPARNL (109 aa). The span at 15–26 shows a compositional bias: basic and acidic residues; that stretch reads RPQSDDAPRIPD.

The protein belongs to the EPG5 family.

The protein localises to the cytoplasm. Its function is as follows. Involved in autophagy. Has a role in the degradation of protein aggregates within autophagosomes. Essential for starvation-induced autotrophy and omegasome development. In Caenorhabditis briggsae, this protein is Ectopic P granules protein 5 (epg-5).